The primary structure comprises 228 residues: Urease accessory protein UreF (228 aa).

The protein belongs to the UreF family. In terms of assembly, ureD, UreF and UreG form a complex that acts as a GTP-hydrolysis-dependent molecular chaperone, activating the urease apoprotein by helping to assemble the nickel containing metallocenter of UreC. The UreE protein probably delivers the nickel.

It is found in the cytoplasm. Required for maturation of urease via the functional incorporation of the urease nickel metallocenter. This chain is Urease accessory protein UreF, found in Alkalilimnicola ehrlichii (strain ATCC BAA-1101 / DSM 17681 / MLHE-1).